The chain runs to 102 residues: Putative nuclear receptor corepressor 1-like protein NCOR1P1 (102 aa).

The span at 1–18 (MSSSGYPPNQGAFSTEQS) shows a compositional bias: polar residues. Residues 1 to 68 (MSSSGYPPNQ…DQNASPSKLS (68 aa)) are disordered. Residues 68 to 100 (SKEELIECMDRVDREIAKVEQQILKLKKKQVKV) are a coiled coil.

The protein belongs to the N-CoR nuclear receptor corepressors family.

The protein is Putative nuclear receptor corepressor 1-like protein NCOR1P1 (NCOR1P1) of Homo sapiens (Human).